The sequence spans 319 residues: uncharacterized protein (319 aa).

Positions 1-23 (MFPFRRNVLAFAALLALSSPVLA) are cleaved as a signal peptide.

This sequence to H.influenzae HI_0755.

This is an uncharacterized protein from Escherichia coli (strain K12).